Reading from the N-terminus, the 340-residue chain is rRNA adenine N-6-methyltransferase (340 aa).

Low complexity predominate over residues 1-25 (MAGPQDRPRGRGPSSGRPQRPVGGR). Residues 1–37 (MAGPQDRPRGRGPSSGRPQRPVGGRSQRDRDRRVLGQ) form a disordered region. S-adenosyl-L-methionine is bound by residues Asn-38, Leu-40, Gly-65, Glu-86, Asp-111, and Ala-127. A disordered region spans residues 284-340 (RGGAARGPGDQRGRRGRPGGGPRPDGRAGGGPRRDAGGRRTGDGRGGRPRPPRGGQA). Gly residues predominate over residues 301 to 314 (PGGGPRPDGRAGGG). The segment covering 315–329 (PRRDAGGRRTGDGRG) has biased composition (basic and acidic residues).

It belongs to the class I-like SAM-binding methyltransferase superfamily. rRNA adenine N(6)-methyltransferase family.

In terms of biological role, involved in erythromycin resistance. In Aeromicrobium erythreum (strain ATCC 51598 / DSM 8599 / JCM 8359 / NBRC 15406 / NRRL B-3381), this protein is rRNA adenine N-6-methyltransferase (ermA).